The following is an 840-amino-acid chain: Sorting nexin-25 (840 aa).

The PXA domain occupies Met1 to Glu164. The region spanning Gln287 to Met401 is the RGS domain. Positions Glu404 to Val437 are disordered. Residues Ile446–Gln494 are a coiled coil. A PX domain is found at Gly508 to Leu628. At Ser665 the chain carries Phosphoserine.

This sequence belongs to the sorting nexin family.

Its subcellular location is the endosome membrane. Its function is as follows. May be involved in several stages of intracellular trafficking. This Mus musculus (Mouse) protein is Sorting nexin-25 (Snx25).